Consider the following 424-residue polypeptide: MGPAGSALSSGQMQMQMVLWGSLAAVAMFFLITFLILLCSSCDRDKKPRQHSGDHESLMNVPSDKEMFSHSATSLTTDALASSEQNGVLTNGDILSEDSTMTCMQHYEEVQTSASDLLDSQDSTGKAKCHQSRELPRIPPENAVDAMLTARAADGDSGPGVEGPYEVLKDSSSQENMVEDCLYETVKEIKEVADKSQGGKSKSTSALKELQGAHAEGKADFAEYASVDRNKKCRHSTNAESILGTSSDLDEETPPPVPVKLLDENANLPEKGEHGAEEQAPEAPSGHSKRFSSLSYKSREEDPTLTEEEISAMYSSVNKPGQSAHKPGPESTCQCPQGPPQRSSSSCNDLYATVKDFEKTPNSISMLPPARRPGEEPEPDYEAIQTLNREDDKVPLGTNGHLVPKENDYESIGDLQQGRDVTRL.

Residues 1 to 17 (MGPAGSALSSGQMQMQM) are Extracellular-facing. The helical; Signal-anchor for type III membrane protein transmembrane segment at 18-38 (VLWGSLAAVAMFFLITFLILL) threads the bilayer. 2 S-palmitoyl cysteine lipidation sites follow: Cys-39 and Cys-42. The Cytoplasmic portion of the chain corresponds to 39-424 (CSSCDRDKKP…LQQGRDVTRL (386 aa)). Phosphoserine occurs at positions 52 and 63. At Tyr-107 the chain carries Phosphotyrosine; by LYN. Ser-157 carries the phosphoserine modification. Phosphotyrosine occurs at positions 165, 183, and 224. A disordered region spans residues 194-347 (DKSQGGKSKS…GPPQRSSSSC (154 aa)). Residues 215 to 230 (AEGKADFAEYASVDRN) are compositionally biased toward basic and acidic residues. Phosphoserine is present on Ser-226. Polar residues predominate over residues 236–247 (STNAESILGTSS). Position 314 is a phosphotyrosine; by FYN and LYN (Tyr-314). Residues 314-317 (YSSV) are interaction with CSK. Residues 331 to 347 (STCQCPQGPPQRSSSSC) show a composition bias toward polar residues. Position 346 is a phosphoserine (Ser-346). Phosphotyrosine is present on residues Tyr-351, Tyr-381, and Tyr-409. Residues 361–424 (PNSISMLPPA…LQQGRDVTRL (64 aa)) form a disordered region. Residues 422-424 (TRL) form an interaction with NHERF1 region.

In terms of assembly, interacts with NHERF1/EBP50. In resting T-cells, part of a PAG1-NHERF1-MSN complex which is disrupted upon TCR activation. When phosphorylated, interacts with CSK. Identified in a complex with LYN and STAT3. Interacts with LYN. In terms of processing, palmitoylated. Post-translationally, phosphorylated by FYN on Tyr-314 in resting T-cells; which promotes interaction with CSK. Dephosphorylated by PTPRC/CD45 upon TCR activation; which leads to CSK dissociation. May also be dephosphorylated by PTPN11. Hyperphosphorylated in mast cells upon FCER1 activation. Phosphorylated by LYN in response to EPO. In terms of tissue distribution, ubiquitously expressed, with highest levels in developing brain, lung, thymus, spleen and testis. Present in mast cells.

Its subcellular location is the cell membrane. Functionally, negatively regulates TCR (T-cell antigen receptor)-mediated signaling in T-cells and FCER1 (high affinity immunoglobulin epsilon receptor)-mediated signaling in mast cells. Promotes CSK activation and recruitment to lipid rafts, which results in LCK inhibition. Inhibits immunological synapse formation by preventing dynamic arrangement of lipid raft proteins. May be involved in cell adhesion signaling. The polypeptide is Phosphoprotein associated with glycosphingolipid-enriched microdomains 1 (Pag1) (Rattus norvegicus (Rat)).